The chain runs to 173 residues: Adenine phosphoribosyltransferase (173 aa).

Belongs to the purine/pyrimidine phosphoribosyltransferase family. As to quaternary structure, homodimer.

The protein resides in the cytoplasm. It carries out the reaction AMP + diphosphate = 5-phospho-alpha-D-ribose 1-diphosphate + adenine. Its pathway is purine metabolism; AMP biosynthesis via salvage pathway; AMP from adenine: step 1/1. Catalyzes a salvage reaction resulting in the formation of AMP, that is energically less costly than de novo synthesis. The sequence is that of Adenine phosphoribosyltransferase from Thermotoga maritima (strain ATCC 43589 / DSM 3109 / JCM 10099 / NBRC 100826 / MSB8).